The sequence spans 467 residues: Trigger factor (467 aa).

Residues 162–243 (GDFVSIDLSA…LNSVKERHLP (82 aa)) enclose the PPIase FKBP-type domain. A compositionally biased stretch (acidic residues) spans 426 to 435 (EEGNELDLDE). The tract at residues 426-467 (EEGNELDLDELFGTQAGEEQGEQAEGTEATDEQSAKADAKAE) is disordered. Residues 436 to 452 (LFGTQAGEEQGEQAEGT) show a composition bias toward low complexity. The segment covering 458 to 467 (QSAKADAKAE) has biased composition (basic and acidic residues).

The protein belongs to the FKBP-type PPIase family. Tig subfamily.

The protein localises to the cytoplasm. The catalysed reaction is [protein]-peptidylproline (omega=180) = [protein]-peptidylproline (omega=0). In terms of biological role, involved in protein export. Acts as a chaperone by maintaining the newly synthesized protein in an open conformation. Functions as a peptidyl-prolyl cis-trans isomerase. This Saccharopolyspora erythraea (strain ATCC 11635 / DSM 40517 / JCM 4748 / NBRC 13426 / NCIMB 8594 / NRRL 2338) protein is Trigger factor.